Here is a 625-residue protein sequence, read N- to C-terminus: Probable potassium transport system protein Kup 2 (625 aa).

12 helical membrane-spanning segments follow: residues 15–35, 52–72, 98–118, 134–154, 164–184, 203–223, 246–266, 284–304, 336–356, 365–385, 394–414, and 417–437; these read LSFA…LYAF, ILSL…LVIV, GGWL…DGIL, LSPN…FFLF, IGIY…VLGF, IYFF…VFLV, WFAV…AFVL, FLPV…QAII, VYLP…VVIF, AYGI…GIIA, FKVM…AGNI, and LLTG…VMYT.

This sequence belongs to the HAK/KUP transporter (TC 2.A.72) family.

The protein resides in the cell inner membrane. It catalyses the reaction K(+)(in) + H(+)(in) = K(+)(out) + H(+)(out). In terms of biological role, transport of potassium into the cell. Likely operates as a K(+):H(+) symporter. The sequence is that of Probable potassium transport system protein Kup 2 from Legionella pneumophila subsp. pneumophila (strain Philadelphia 1 / ATCC 33152 / DSM 7513).